The chain runs to 98 residues: DNA-binding protein Fis (98 aa).

Residues 74–93 (QTRAATMLGINRGTLRKKLK) constitute a DNA-binding region (H-T-H motif).

This sequence belongs to the transcriptional regulatory Fis family. In terms of assembly, homodimer.

In terms of biological role, activates ribosomal RNA transcription. Plays a direct role in upstream activation of rRNA promoters. This is DNA-binding protein Fis from Haemophilus ducreyi (strain 35000HP / ATCC 700724).